Consider the following 596-residue polypeptide: Nuclear receptor subfamily 2 group C member 2 (596 aa).

Residue serine 19 is modified to Phosphoserine; by MAPK. The residue at position 46 (serine 46) is a Phosphoserine. Serine 55 and serine 68 each carry phosphoserine; by MAPK. A Phosphoserine modification is found at serine 98. The segment at residues 114–189 (VEYCVVCGDK…MGMKMESVQS (76 aa)) is a DNA-binding region (nuclear receptor). 2 NR C4-type zinc fingers span residues 117–137 (CVVC…CEGC) and 153–177 (CRSS…LKKC). Residue lysine 192 forms a Glycyl lysine isopeptide (Lys-Gly) (interchain with G-Cter in SUMO2) linkage. The residue at position 219 (serine 219) is a Phosphoserine. An N6-acetyllysine modification is found at lysine 231. Residues 341 to 583 (GSIHVISRDQ…SIIPYILKME (243 aa)) form the NR LBD domain.

This sequence belongs to the nuclear hormone receptor family. NR2 subfamily. In terms of assembly, homodimer; can bind DNA as homodimer. Heterodimer; binds DNA as a heterodimer with NR2C1 required for chromatin remodeling and for binding to promoter regions such as globin DR1 repeats. Interacts with NR2C2AP; the interaction represses selective NR2C2-mediated transcriptional activity. Interacts with PCAF; the interaction preferentially occurs on the non-phosphorylated form and induces NR2C2-mediated transactivation activity and does not require the ligand-binding domain. Interacts (MAPK-mediated phosphorylated form) with NRIP1; the interaction promotes repression of NR2C2-mediated activity. Interacts with NLRP10. Interacts (via ligand-binding region) with transcriptional corepressor JAZF1; the interaction promotes NR2C2-mediated transcriptional repression. In terms of processing, phosphorylation on Ser-19 and Ser-68 is an important regulator of NR2C2-mediated transcriptional activity. Phosphorylation on these residues recruits the corepressor, NRIP1, leading to transcripional repression, whereas the non-phosphorylated form preferentially recruits the coactivator, PCAF. Expressed in hepatocytes. Also expressed in granule cells of the hippocampus and the cerebellum.

The protein resides in the nucleus. Functionally, orphan nuclear receptor that can act as a repressor or activator of transcription. An important repressor of nuclear receptor signaling pathways such as retinoic acid receptor, retinoid X, vitamin D3 receptor, thyroid hormone receptor and estrogen receptor pathways. May regulate gene expression during the late phase of spermatogenesis. Activates transcriptional activity of LHCG and is antagonist of PPARA-mediated transactivation. Together with NR2C1, forms the core of the DRED (direct repeat erythroid-definitive) complex that represses embryonic and fetal globin transcription including that of GATA1. Binds to hormone response elements (HREs) consisting of two 5'-AGGTCA-3' half site direct repeat consensus sequences. Plays a fundamental role in early embryonic development and embryonic stem cells. Required for normal spermatogenesis and cerebellum development. Appears to be important for neurodevelopmentally regulated behavior. This Rattus norvegicus (Rat) protein is Nuclear receptor subfamily 2 group C member 2 (Nr2c2).